A 307-amino-acid polypeptide reads, in one-letter code: Pseudouridine-5'-phosphate glycosidase (307 aa).

Glutamate 28 acts as the Proton donor in catalysis. Residues lysine 89 and valine 109 each coordinate substrate. Residue aspartate 141 participates in Mn(2+) binding. A substrate-binding site is contributed by 143 to 145 (SAD). The active-site Nucleophile is the lysine 162.

This sequence belongs to the pseudouridine-5'-phosphate glycosidase family. Homotrimer. The cofactor is Mn(2+).

It catalyses the reaction D-ribose 5-phosphate + uracil = psi-UMP + H2O. In terms of biological role, catalyzes the reversible cleavage of pseudouridine 5'-phosphate (PsiMP) to ribose 5-phosphate and uracil. Functions biologically in the cleavage direction, as part of a pseudouridine degradation pathway. The sequence is that of Pseudouridine-5'-phosphate glycosidase from Nocardioides sp. (strain ATCC BAA-499 / JS614).